A 220-amino-acid chain; its full sequence is Transcriptional regulatory protein LnrK (220 aa).

Residues 3–119 (KIIITDDQDI…TIVKAVMTVH (117 aa)) enclose the Response regulatory domain. Asp-54 bears the 4-aspartylphosphate mark. One can recognise an HTH luxR-type domain in the interval 151 to 216 (KPNELLDLTE…QAAIYSVRYG (66 aa)). Positions 175-194 (NKEIAEKLYITEGTVKNHVS) form a DNA-binding region, H-T-H motif.

Phosphorylated by LnrJ.

It is found in the cytoplasm. In terms of biological role, required for resistance to linearmycins, a family of antibiotic-specialized metabolites produced by some streptomycetes. Member of the two-component regulatory system LnrJ/LnrK, which induces expression of the LnrLMN ABC transporter in response to linearmycins and other polyenes. Probably binds to the promoter region of the lnrLMN operon and directly regulates its expression. May also promote biofilm formation. In Bacillus subtilis (strain 168), this protein is Transcriptional regulatory protein LnrK.